We begin with the raw amino-acid sequence, 169 residues long: Large ribosomal subunit protein uL10 (169 aa).

It belongs to the universal ribosomal protein uL10 family. In terms of assembly, part of the ribosomal stalk of the 50S ribosomal subunit. The N-terminus interacts with L11 and the large rRNA to form the base of the stalk. The C-terminus forms an elongated spine to which L12 dimers bind in a sequential fashion forming a multimeric L10(L12)X complex.

Forms part of the ribosomal stalk, playing a central role in the interaction of the ribosome with GTP-bound translation factors. The chain is Large ribosomal subunit protein uL10 from Staphylococcus saprophyticus subsp. saprophyticus (strain ATCC 15305 / DSM 20229 / NCIMB 8711 / NCTC 7292 / S-41).